We begin with the raw amino-acid sequence, 442 residues long: Putative pyrimidine permease RutG (442 aa).

The Cytoplasmic segment spans residues 1–57; the sequence is MAMFGFPHWQLKSTSTESGVVAPDERLPFAQTAVMGVQHAVAMFGATVLMPILMGLD. The chain crosses the membrane as a helical span at residues 58–78; sequence PNLSILMSGIGTLLFFFITGG. A topological domain (periplasmic) is located at residue Arg-79. A helical transmembrane segment spans residues 80–100; sequence VPSYLGSSAAFVGVVIAATGF. Residues 101–110 are Cytoplasmic-facing; that stretch reads NGQGINPNIS. A helical transmembrane segment spans residues 111–131; sequence IALGGIIACGLVYTVIGLVVM. Over 132–140 the chain is Periplasmic; the sequence is KIGTRWIER. The chain crosses the membrane as a helical span at residues 141–161; that stretch reads LMPPVVTGAVVMAIGLNLAPI. At 162–169 the chain is on the cytoplasmic side; the sequence is AVKSVSAS. The chain crosses the membrane as a helical span at residues 170 to 190; that stretch reads AFDSWMAVMTVLCIGLVAVFT. Over 191-196 the chain is Periplasmic; that stretch reads RGMIQR. The helical transmembrane segment at 197–217 threads the bilayer; it reads LLILVGLIVACLLYGVMTNVL. The Cytoplasmic segment spans residues 218–240; it reads GLGKAVDFTLVSHAAWFGLPHFS. Residues 241 to 261 form a helical membrane-spanning segment; the sequence is TPAFNGQAMMLIAPVAVILVA. The Periplasmic segment spans residues 262–284; sequence ENLGHLKAVAGMTGRNMDPYMGR. The chain crosses the membrane as a helical span at residues 285 to 305; that stretch reads AFVGDGLATMLSGSVGGSGVT. The Cytoplasmic portion of the chain corresponds to 306 to 318; it reads TYAENIGVMAVTK. A helical membrane pass occupies residues 319–339; the sequence is VYSTLVFVAAAVIAMLLGFSP. The Periplasmic portion of the chain corresponds to 340–347; sequence KFGALIHT. A helical membrane pass occupies residues 348–368; that stretch reads IPAAVIGGASIVVFGLIAVAG. Residues 369-385 lie on the Cytoplasmic side of the membrane; it reads ARIWVQNRVDLSQNGNL. 2 helical membrane passes run 386–406 and 407–427; these read IMVAVTLVLGAGDFALTLGGF and TLGGIGTATFGAILLNALLSR. At 428–442 the chain is on the cytoplasmic side; sequence KLVDVPPPEVVHQEP.

This sequence belongs to the nucleobase:cation symporter-2 (NCS2) (TC 2.A.40) family.

It is found in the cell inner membrane. Functionally, may function as a proton-driven pyrimidine uptake system. This Escherichia coli (strain K12) protein is Putative pyrimidine permease RutG (rutG).